The following is a 467-amino-acid chain: A-type ATP synthase subunit B (467 aa).

A disordered region spans residues 95-114 (GKGQPRDHMPLPPPEDFRDV).

This sequence belongs to the ATPase alpha/beta chains family. As to quaternary structure, has multiple subunits with at least A(3), B(3), C, D, E, F, H, I and proteolipid K(x).

It localises to the cell membrane. Its function is as follows. Component of the A-type ATP synthase that produces ATP from ADP in the presence of a proton gradient across the membrane. The B chain is a regulatory subunit. This Pyrobaculum islandicum (strain DSM 4184 / JCM 9189 / GEO3) protein is A-type ATP synthase subunit B.